The sequence spans 98 residues: NADH-ubiquinone oxidoreductase chain 4L (98 aa).

Transmembrane regions (helical) follow at residues 1-21, 28-48, and 61-81; these read MEQINLNMITAFTIALMGVLT, STLLCLEGMMLSLFILMVLLI, and LILLVFSACEAGVGLALLVTI.

It belongs to the complex I subunit 4L family. In terms of assembly, core subunit of respiratory chain NADH dehydrogenase (Complex I) which is composed of 45 different subunits.

The protein resides in the mitochondrion inner membrane. It catalyses the reaction a ubiquinone + NADH + 5 H(+)(in) = a ubiquinol + NAD(+) + 4 H(+)(out). Functionally, core subunit of the mitochondrial membrane respiratory chain NADH dehydrogenase (Complex I) which catalyzes electron transfer from NADH through the respiratory chain, using ubiquinone as an electron acceptor. Part of the enzyme membrane arm which is embedded in the lipid bilayer and involved in proton translocation. In Monodelphis domestica (Gray short-tailed opossum), this protein is NADH-ubiquinone oxidoreductase chain 4L (MT-ND4L).